The sequence spans 876 residues: Radial spoke head 10 homolog B (876 aa).

Over residues 1-16 the composition is skewed to basic and acidic residues; that stretch reads MVKEKKKADKKGDKSA. A disordered region spans residues 1–71; that stretch reads MVKEKKKADK…VQMEQSEEET (71 aa). Residues 17–37 are compositionally biased toward polar residues; sequence RSPSSISDNPEASKQDSNASK. The span at 39–50 shows a compositional bias: low complexity; sequence EVAPSAVVPVVE. 10 MORN repeats span residues 86-108, 109-129, 132-154, 155-172, 179-196, 204-225, 227-244, 251-268, 284-305, and 307-328; these read YEGE…GGNT, YHGM…WADG, YEGD…DGST, YEGE…MFKC, YIGH…SIYY, YEGD…KSGN, YEGQ…RMRW, YTGH…THTW, YIGE…ASGA, and YEGE…KNGH. Over residues 356–372 the composition is skewed to polar residues; that stretch reads WSDASQRSRQPRGSSVS. The tract at residues 356 to 386 is disordered; that stretch reads WSDASQRSRQPRGSSVSAVREPETLRKLDGS. A compositionally biased stretch (basic and acidic residues) spans 375-386; sequence REPETLRKLDGS. Residues 790-832 adopt a coiled-coil conformation; sequence LKEKVKENQLQEAELAQQRQIENEELEARLNILREEEARKQDF. The interval 839-876 is disordered; that stretch reads LKEPSEIPASQPLTPSPPKEDLASIQTSKASPGKKKKK.

In terms of assembly, interacts with RSPH6A. Does not appear to be part of the axonemal radial spoke complexes 1 or 2. As to expression, expressed in ependymal cells (at protein level).

Its subcellular location is the cytoplasm. The protein localises to the cytoskeleton. It is found in the cilium axoneme. The protein resides in the cell projection. It localises to the cilium. Its subcellular location is the flagellum. May function as part of the axonemal radial spoke complex 3 (RS3). Radial spoke complexes are important for ciliary motility. This Mus musculus (Mouse) protein is Radial spoke head 10 homolog B.